We begin with the raw amino-acid sequence, 272 residues long: uncharacterized protein (272 aa).

The disordered stretch occupies residues 101–130 (CPTGKKNKAPSSLIPKISKTSTSSLTKEDE). Residues 110 to 125 (PSSLIPKISKTSTSSL) are compositionally biased toward low complexity. Ser-142 carries the post-translational modification Phosphoserine.

This is an uncharacterized protein from Arabidopsis thaliana (Mouse-ear cress).